The following is a 387-amino-acid chain: Protein WHAT'S THIS FACTOR 9, mitochondrial (387 aa).

The N-terminal 24 residues, 1–24 (MLSIRRHAKTVASSCTNLTQKRTY), are a transit peptide targeting the mitochondrion. The PORR domain maps to 32 to 358 (KRDPYFDNIE…KKYIQLMKNS (327 aa)).

It localises to the mitochondrion. Functionally, RNA-binding protein involved in group II intron splicing. Binds specific group II introns and promotes their splicing (e.g. rpl2 and ccmFC). The chain is Protein WHAT'S THIS FACTOR 9, mitochondrial from Arabidopsis thaliana (Mouse-ear cress).